The chain runs to 274 residues: CDC48-associated ubiquitin-like/zinc finger protein 1 (274 aa).

The segment at 12–58 (LDVGKHCAYCRQLDFLPFHCSFCNEDFCSNHRLKEDHHCRWLLEHEE) adopts an AN1-type zinc-finger fold. 8 residues coordinate Zn(2+): Cys18, Cys21, Cys31, Cys34, Cys39, His42, His48, and Cys50. Positions 170–266 (NRIYIWCYLV…KDLDTLYLVH (97 aa)) are ubiquitin-like. Phosphoserine is present on Ser273.

Interacts (via its ubiquitin-like domain) with CDC48 (via N-terminus). Associates with the 26S proteasome. Specifically interacts with the regulatory particle (RP) subunit RPN2. Exposure to arsenite, a known inducer of protein misfolding resulting in accumulation of polyubiquitinated conjugates, enhances the association with the proteoasome. Binds to ubiquitinated proteins conjugated to a 4 or more molecule ubiquitin chain. Binding to ubiquitinated proteins is zinc-dependent.

The protein resides in the cytoplasm. It localises to the nucleus. Promotes efficient arsenite-induced clearance of stress granules (SGs). May have a role in the ubiquitin-proteasome system (UPS) protecting cells from metalloid-induced proteotoxicity. The polypeptide is CDC48-associated ubiquitin-like/zinc finger protein 1 (Saccharomyces cerevisiae (strain ATCC 204508 / S288c) (Baker's yeast)).